Consider the following 188-residue polypeptide: dCTP deaminase (188 aa).

109 to 114 lines the dCTP pocket; sequence KSTYAR. E135 functions as the Proton donor/acceptor in the catalytic mechanism. DCTP-binding residues include Q154, Y168, and Q178.

It belongs to the dCTP deaminase family. As to quaternary structure, homotrimer.

The catalysed reaction is dCTP + H2O + H(+) = dUTP + NH4(+). It participates in pyrimidine metabolism; dUMP biosynthesis; dUMP from dCTP (dUTP route): step 1/2. Functionally, catalyzes the deamination of dCTP to dUTP. In Helicobacter pylori (strain G27), this protein is dCTP deaminase.